A 323-amino-acid polypeptide reads, in one-letter code: Extracellular endo-alpha-(1-&gt;5)-L-arabinanase 1 (323 aa).

The first 32 residues, 1–32, serve as a signal peptide directing secretion; sequence MKKKKTWKRFLHFSSAALAAGLIFTSAAPAEA. Residue Asp-44 is the Proton acceptor of the active site. Residue Asp-44 participates in substrate binding. Residue Asp-107 participates in Ca(2+) binding. Substrate contacts are provided by residues Gly-125 and 160 to 163; that span reads NAID. Glu-165 provides a ligand contact to Ca(2+). Residue 180-182 participates in substrate binding; the sequence is SFW. Residue Glu-215 is the Proton donor of the active site. Asp-287 is a Ca(2+) binding site.

This sequence belongs to the glycosyl hydrolase 43 family. Requires Ca(2+) as cofactor.

It localises to the secreted. It carries out the reaction Endohydrolysis of (1-&gt;5)-alpha-arabinofuranosidic linkages in (1-&gt;5)-arabinans.. Its pathway is glycan metabolism; L-arabinan degradation. In terms of biological role, involved in the degradation of arabinan and is a key enzyme in the complete degradation of the plant cell wall. Catalyzes the internal cleavage of alpha-(1-&gt;5)-L-arabinofuranosyl residues of linear 1,5-alpha-L-arabinan and of branched sugar beet arabinan. It displays no activity against heavily substituted arabinans or a range of other polysaccharides (larch wood arabinogalactan, wheat arabinoxylan and p-nitrophenyl-alpha-L-arabinofuranoside). The enzyme activity is progressively reduced as alpha-(1-&gt;5)-chains become shorter or more highly substituted. This is Extracellular endo-alpha-(1-&gt;5)-L-arabinanase 1 (abnA) from Bacillus subtilis (strain 168).